The sequence spans 65 residues: Beta-mammal toxin Tma1 (65 aa).

The region spanning 2–64 is the LCN-type CS-alpha/beta domain; it reads KEGYLVGNDG…TWNSAKNRCG (63 aa). 4 cysteine pairs are disulfide-bonded: cysteine 12-cysteine 63, cysteine 16-cysteine 38, cysteine 24-cysteine 44, and cysteine 28-cysteine 46.

Belongs to the long (4 C-C) scorpion toxin superfamily. Sodium channel inhibitor family. Expressed by the venom gland.

It localises to the secreted. In terms of biological role, beta toxins bind voltage-independently at site-4 of sodium channels (Nav) and shift the voltage of activation toward more negative potentials thereby affecting sodium channel activation and promoting spontaneous and repetitive firing. This toxin acts on human Nav1.4/SCN4A and Nav1.6/SCN8A voltage-gated sodium channels. This is Beta-mammal toxin Tma1 from Tityus macrochirus (Scorpion).